The chain runs to 226 residues: MAPKSDNTEAIVLNFVNEQNKPLNTQNAADALQKFNLKKTAVQKALDSLADAGKITFKEYGKQKIYIARQDQFEIPNSEELAQMKEDNAKLQEQLQEKKKTISDVESEIKSLQSNLTLEEIQEKDAKLRKEVKEMEEKLVKLREGITLVRPEDKKAVEDMYADKINQWRKRKRMFRDIWDTVTENSPKDVKELKEELGIEYDEDVGLSFQAYADLIQHGKKRPRGQ.

Positions 76–150 (PNSEELAQMK…KLREGITLVR (75 aa)) form a coiled coil.

It belongs to the HOP2 family. Interacts with MND1 and MIP1. Expressed in vegetative and reproductive tissues. Found in seedlings, leaves and flowers.

The protein resides in the nucleus. In terms of biological role, involved in bivalent formation and segregation of homologous chromosomes in meiosis. In Arabidopsis thaliana (Mouse-ear cress), this protein is Homologous-pairing protein 2 homolog (HOP2).